A 364-amino-acid chain; its full sequence is Peptide chain release factor 2 (364 aa).

Position 252 is an N5-methylglutamine (glutamine 252).

The protein belongs to the prokaryotic/mitochondrial release factor family. Post-translationally, methylated by PrmC. Methylation increases the termination efficiency of RF2.

The protein resides in the cytoplasm. In terms of biological role, peptide chain release factor 2 directs the termination of translation in response to the peptide chain termination codons UGA and UAA. This Clostridium perfringens (strain SM101 / Type A) protein is Peptide chain release factor 2.